Reading from the N-terminus, the 300-residue chain is UDP-3-O-acyl-N-acetylglucosamine deacetylase (300 aa).

Residues H78, H237, and D241 each coordinate Zn(2+). The active-site Proton donor is H264.

This sequence belongs to the LpxC family. Zn(2+) is required as a cofactor.

It catalyses the reaction a UDP-3-O-[(3R)-3-hydroxyacyl]-N-acetyl-alpha-D-glucosamine + H2O = a UDP-3-O-[(3R)-3-hydroxyacyl]-alpha-D-glucosamine + acetate. The protein operates within glycolipid biosynthesis; lipid IV(A) biosynthesis; lipid IV(A) from (3R)-3-hydroxytetradecanoyl-[acyl-carrier-protein] and UDP-N-acetyl-alpha-D-glucosamine: step 2/6. Its function is as follows. Catalyzes the hydrolysis of UDP-3-O-myristoyl-N-acetylglucosamine to form UDP-3-O-myristoylglucosamine and acetate, the committed step in lipid A biosynthesis. This Acinetobacter baumannii (strain SDF) protein is UDP-3-O-acyl-N-acetylglucosamine deacetylase.